The following is a 303-amino-acid chain: Protein REVEILLE 5 (303 aa).

The HTH myb-type domain maps to 54 to 108 (TIKKSRENWTDQEHDKFLEALHLFDRDWKKIEAFVGSKTVVQIRSHAQKYFLKVQ). A DNA-binding region (H-T-H motif) is located at residues 81–104 (WKKIEAFVGSKTVVQIRSHAQKYF). The tract at residues 109–130 (KSGANEHLPPPRPKRKASHPYP) is disordered.

Its subcellular location is the nucleus. Functionally, probable transcription factor. The polypeptide is Protein REVEILLE 5 (RVE5) (Arabidopsis thaliana (Mouse-ear cress)).